A 318-amino-acid chain; its full sequence is Pantothenate synthetase (318 aa).

Residue 44–51 (MGALHQGH) participates in ATP binding. Catalysis depends on His-51, which acts as the Proton donor. Gln-75 serves as a coordination point for (R)-pantoate. Gln-75 is a binding site for beta-alanine. ATP is bound at residue 161-164 (GEKD). Position 167 (Gln-167) interacts with (R)-pantoate. ATP is bound by residues Val-190 and 198 to 201 (LSSR). Residues 295-318 (DGHPNLDSQPEPAGTDPALLPPAR) are disordered.

The protein belongs to the pantothenate synthetase family. As to quaternary structure, homodimer.

The protein localises to the cytoplasm. The enzyme catalyses (R)-pantoate + beta-alanine + ATP = (R)-pantothenate + AMP + diphosphate + H(+). The protein operates within cofactor biosynthesis; (R)-pantothenate biosynthesis; (R)-pantothenate from (R)-pantoate and beta-alanine: step 1/1. Its function is as follows. Catalyzes the condensation of pantoate with beta-alanine in an ATP-dependent reaction via a pantoyl-adenylate intermediate. This is Pantothenate synthetase from Nocardia farcinica (strain IFM 10152).